The primary structure comprises 254 residues: Ribosomal RNA small subunit methyltransferase J (254 aa).

Residues 107 to 108, 123 to 124, and Asp-177 contribute to the S-adenosyl-L-methionine site; these read RD and ER.

It belongs to the methyltransferase superfamily. RsmJ family.

It localises to the cytoplasm. It catalyses the reaction guanosine(1516) in 16S rRNA + S-adenosyl-L-methionine = N(2)-methylguanosine(1516) in 16S rRNA + S-adenosyl-L-homocysteine + H(+). Functionally, specifically methylates the guanosine in position 1516 of 16S rRNA. The sequence is that of Ribosomal RNA small subunit methyltransferase J from Histophilus somni (strain 129Pt) (Haemophilus somnus).